Consider the following 472-residue polypeptide: Methanethiol oxidase (472 aa).

The protein belongs to the selenium-binding protein family.

The protein localises to the nucleus. It localises to the cytoplasm. Its subcellular location is the cytosol. It is found in the membrane. It catalyses the reaction methanethiol + O2 + H2O = hydrogen sulfide + formaldehyde + H2O2 + H(+). It participates in organosulfur degradation. Functionally, catalyzes the oxidation of methanethiol, an organosulfur compound known to be produced in substantial amounts by gut bacteria. Selenium-binding protein which may be involved in the sensing of reactive xenobiotics in the cytoplasm. May be involved in intra-Golgi protein transport. This Xenopus laevis (African clawed frog) protein is Methanethiol oxidase (selenbp1-a).